The primary structure comprises 373 residues: T-protein (373 aa).

Residues 1–90 (MVAELTALRD…ESYSSENDKG (90 aa)) enclose the Chorismate mutase domain. A Prephenate/arogenate dehydrogenase domain is found at 99–361 (RPVVIVGGGG…DYAQRFQSES (263 aa)).

In the C-terminal section; belongs to the prephenate/arogenate dehydrogenase family.

It localises to the cytoplasm. It carries out the reaction chorismate = prephenate. The catalysed reaction is prephenate + NAD(+) = 3-(4-hydroxyphenyl)pyruvate + CO2 + NADH. It functions in the pathway amino-acid biosynthesis; L-tyrosine biosynthesis; (4-hydroxyphenyl)pyruvate from prephenate (NAD(+) route): step 1/1. The protein operates within metabolic intermediate biosynthesis; prephenate biosynthesis; prephenate from chorismate: step 1/1. The protein is T-protein (tyrA) of Escherichia coli (strain K12).